We begin with the raw amino-acid sequence, 199 residues long: Holliday junction branch migration complex subunit RuvA (199 aa).

Residues Met1–Arg64 are domain I. The tract at residues Thr65–Gly143 is domain II. The segment at Gly144–Pro148 is flexible linker. Positions Ala149 to Lys199 are domain III.

It belongs to the RuvA family. As to quaternary structure, homotetramer. Forms an RuvA(8)-RuvB(12)-Holliday junction (HJ) complex. HJ DNA is sandwiched between 2 RuvA tetramers; dsDNA enters through RuvA and exits via RuvB. An RuvB hexamer assembles on each DNA strand where it exits the tetramer. Each RuvB hexamer is contacted by two RuvA subunits (via domain III) on 2 adjacent RuvB subunits; this complex drives branch migration. In the full resolvosome a probable DNA-RuvA(4)-RuvB(12)-RuvC(2) complex forms which resolves the HJ.

Its subcellular location is the cytoplasm. Its function is as follows. The RuvA-RuvB-RuvC complex processes Holliday junction (HJ) DNA during genetic recombination and DNA repair, while the RuvA-RuvB complex plays an important role in the rescue of blocked DNA replication forks via replication fork reversal (RFR). RuvA specifically binds to HJ cruciform DNA, conferring on it an open structure. The RuvB hexamer acts as an ATP-dependent pump, pulling dsDNA into and through the RuvAB complex. HJ branch migration allows RuvC to scan DNA until it finds its consensus sequence, where it cleaves and resolves the cruciform DNA. The polypeptide is Holliday junction branch migration complex subunit RuvA (Geobacter sp. (strain M21)).